The chain runs to 120 residues: MWGYIHLISWVAIVVLTITALLIYSKSTKSFTMLQMINRVFYILVILSGIMMVKYSIEQSWILAIFKILMGIIVIGVVEMLLSYRKQQKPTGMFLMIFVIVVVITISLGFYLSGGYPLFN.

Transmembrane regions (helical) follow at residues 3–23, 33–53, 62–82, and 92–112; these read GYIHLISWVAIVVLTITALLI, MLQMINRVFYILVILSGIMMV, ILAIFKILMGIIVIGVVEMLL, and GMFLMIFVIVVVITISLGFYL.

Belongs to the UPF0344 family.

It localises to the cell membrane. This chain is UPF0344 protein lmo2265, found in Listeria monocytogenes serovar 1/2a (strain ATCC BAA-679 / EGD-e).